The following is a 473-amino-acid chain: SHC-transforming protein 1 (473 aa).

The segment at 1–26 (MNKLSGGGGRRTRVEGGQLGGEEWTR) is disordered. Ser-29 is modified (phosphoserine). Lys-44 is subject to N6-acetyllysine. Positions 46 to 229 (MGPGVSYLVR…AGFDGSAWDE (184 aa)) constitute a PID domain. Positions 216 to 314 (HDRMAGFDGS…PSSGRELFDD (99 aa)) are disordered. The interval 230-377 (EEEEPPDHQY…AMAEQLRGEP (148 aa)) is CH1. Tyr-239, Tyr-240, and Tyr-317 each carry phosphotyrosine. Residues 328 to 348 (QAGAGAGPPNPTINGSAPRDL) are disordered. At Ser-343 the chain carries Phosphoserine. Residues 378–469 (WFHGKLSRRE…GSELCLQQPV (92 aa)) enclose the SH2 domain.

Interacts with CPNE3; this interaction may mediate the binding of CPNE3 with ERBB2. Interacts with the Trk receptors NTRK1, NTRK2 and NTRK3; in a phosphotyrosine-dependent manner. Interacts with the NPXY motif of tyrosine-phosphorylated IGF1R and INSR in vitro via the PID domain. Once activated, binds to GRB2. Interacts with tyrosine-phosphorylated CD3T and DDR2. Interacts with the N-terminal region of APS. Interacts with phosphorylated LRP1 and IRS4. Interacts with INPP5D/SHIP1 and INPPL1/SHIP2. Interacts with ALK, GAB2, GRB7 and KIT. Interacts with PTPN6/SHP (tyrosine phosphorylated). Identified in a complex containing FGFR4, NCAM1, CDH2, PLCG1, FRS2, SRC, SHC1, GAP43 and CTTN. Interacts with FLT4 (tyrosine-phosphorylated). Interacts with EPHB1 and GRB2; activates the MAPK/ERK cascade to regulate cell migration. Interacts with PDGFRB (tyrosine-phosphorylated). Interacts with ERBB4. Interacts with TEK/TIE2 (tyrosine-phosphorylated). Interacts with PTK2/FAK1. Interacts with CEACAM1; this interaction is CEACAM1-phosphorylation-dependent and mediates interaction with EGFR or INSR resulting in decrease coupling of SHC1 to the MAPK3/ERK1-MAPK1/ERK2 pathway. Interacts (via PID domain) with PEAK1 (when phosphorylated). Found in a complex with PPP1CA, PPP1CC, SHC1 and PEAK1. In terms of processing, phosphorylated by activated epidermal growth factor receptor. Phosphorylated in response to KIT signaling. Tyrosine phosphorylated in response to FLT3 and FLT4 signaling and by ligand-activated ALK. Tyrosine phosphorylated by ligand-activated PDGFRB. Tyrosine phosphorylated by TEK/TIE2. May be tyrosine phosphorylated by activated PTK2/FAK1. Tyrosine phosphorylated by activated PTK2B/PYK2. Dephosphorylation by PTPN2 may regulate interaction with GRB2.

The protein localises to the cytoplasm. Its subcellular location is the cell junction. The protein resides in the focal adhesion. Its function is as follows. Signaling adapter that couples activated growth factor receptors to signaling pathways. Participates in a signaling cascade initiated by activated KIT and KITLG/SCF. Participates in signaling downstream of the angiopoietin receptor TEK/TIE2, and plays a role in the regulation of endothelial cell migration and sprouting angiogenesis. This chain is SHC-transforming protein 1 (SHC1), found in Bos taurus (Bovine).